The chain runs to 737 residues: Cilium assembly protein DZIP1L (737 aa).

Positions 1-293 (MGFKGKYPQM…LKQSNEQFIQ (293 aa)) are interaction with Rab8. Positions 98–132 (VTDLKEAHTTAQEEIATLRKSLSESNNEVVQLHKR) form a coiled coil. Residues 144–167 (YPCHLCTKNFISNEALNVHIGRKH) form a C2H2-type zinc finger. 5 disordered regions span residues 167–187 (HRVA…DRDK), 214–267 (ERNI…KEQL), 415–548 (SEFL…RKDA), 624–682 (KSPL…VSRD), and 698–737 (IRGA…DNLK). Basic and acidic residues-rich tracts occupy residues 244–266 (EPKE…RKEQ) and 415–438 (SEFL…KGSE). Positions 457-469 (SAGSSDSNPTYTK) are enriched in polar residues. Positions 492-510 (SQEETENEEERSLTEEEGT) are enriched in acidic residues. Residues 665-677 (SSEQQTRSPSPQR) show a composition bias toward polar residues. Basic and acidic residues predominate over residues 724 to 737 (EDGKSFNDSDDNLK).

This sequence belongs to the DZIP C2H2-type zinc-finger protein family. In terms of assembly, component of a ciliary transition zone (TZ)-localized complex composed of DZIP1, Fam92 and Cby. Interacts directly with Cby. Interacts with Cep290 (via N-terminus). Interacts (via N-terminus) with Rab8. In neurons of the second and third antennal segments, expressed at the tip of the dendrites.

Its subcellular location is the cytoplasm. The protein localises to the cytoskeleton. It localises to the microtubule organizing center. The protein resides in the centrosome. It is found in the centriole. Its subcellular location is the cilium basal body. In terms of biological role, component of the DZIP1-Fam92-Cby complex which promotes ciliogenesis in sensory neurons and spermatocytes by acting downstream of Cep290 to initiate early ciliary membrane formation and thus transition zone (TZ) assembly. During spermatogenesis, also regulates distal elongation of the basal-body and their docking (anchoring) to the plasma membrane and as a consequence, regulates the initiation and proper elongation of axonemal microtubules. Within the complex, required to recruit or stabilize Rab8, Fam92 and Cby at the distal basal body of cilia to promote early ciliary membrane formation and initiate TZ assembly. Also acts with Fam92 to restrict Cep290 localization to the proximal part of the TZ. May also be involved in recruitment or stabilization of Mks1 at the TZ. This chain is Cilium assembly protein DZIP1L, found in Drosophila melanogaster (Fruit fly).